The sequence spans 155 residues: Mediator of RNA polymerase II transcription subunit 21 (155 aa).

Residues 29–73 form a disordered region; that stretch reads QAPPSVPPGQHRVDTMPEIKGKAASENPQSNPPQPAEPPVPEKIS. Residues 39–51 show a composition bias toward basic and acidic residues; the sequence is HRVDTMPEIKGKA. Residues 58–69 are compositionally biased toward pro residues; it reads SNPPQPAEPPVP. Residues 75–147 are a coiled coil; the sequence is EQFNQDLKEF…EVLLKKVEDK (73 aa).

The protein belongs to the Mediator complex subunit 21 family. As to quaternary structure, component of the Mediator complex.

The protein localises to the nucleus. Functionally, component of the Mediator complex, a coactivator involved in the regulated transcription of nearly all RNA polymerase II-dependent genes. Mediator functions as a bridge to convey information from gene-specific regulatory proteins to the basal RNA polymerase II transcription machinery. Mediator is recruited to promoters by direct interactions with regulatory proteins and serves as a scaffold for the assembly of a functional preinitiation complex with RNA polymerase II and the general transcription factors. The chain is Mediator of RNA polymerase II transcription subunit 21 (SRB7) from Phaeosphaeria nodorum (strain SN15 / ATCC MYA-4574 / FGSC 10173) (Glume blotch fungus).